Consider the following 307-residue polypeptide: Ribosomal RNA small subunit methyltransferase H (307 aa).

Residues 32 to 34 (GGH), Asp52, Phe78, Asp99, and Gln106 each bind S-adenosyl-L-methionine.

It belongs to the methyltransferase superfamily. RsmH family.

It localises to the cytoplasm. It carries out the reaction cytidine(1402) in 16S rRNA + S-adenosyl-L-methionine = N(4)-methylcytidine(1402) in 16S rRNA + S-adenosyl-L-homocysteine + H(+). Its function is as follows. Specifically methylates the N4 position of cytidine in position 1402 (C1402) of 16S rRNA. This is Ribosomal RNA small subunit methyltransferase H from Caldicellulosiruptor saccharolyticus (strain ATCC 43494 / DSM 8903 / Tp8T 6331).